A 181-amino-acid chain; its full sequence is Large ribosomal subunit protein uL5c (181 aa).

This sequence belongs to the universal ribosomal protein uL5 family. As to quaternary structure, part of the 50S ribosomal subunit; contacts the 5S rRNA.

Its subcellular location is the plastid. It localises to the chloroplast. Functionally, binds 5S rRNA, forms part of the central protuberance of the 50S subunit. The chain is Large ribosomal subunit protein uL5c (rpl5) from Guillardia theta (Cryptophyte).